Here is a 308-residue protein sequence, read N- to C-terminus: UDP-N-acetylenolpyruvoylglucosamine reductase (308 aa).

The 164-residue stretch at 22–185 folds into the FAD-binding PCMH-type domain; the sequence is RVGGPADWLF…TEATFRAEAG (164 aa). Arginine 165 is a catalytic residue. Positions 197 to 211 are enriched in basic and acidic residues; sequence QIARRDSSQPTKERS. The interval 197 to 228 is disordered; that stretch reads QIARRDSSQPTKERSAGSTFRNPAGFSSTGRA. Over residues 212 to 226 the composition is skewed to polar residues; that stretch reads AGSTFRNPAGFSSTG. Catalysis depends on serine 214, which acts as the Proton donor. Residue glutamate 296 is part of the active site.

Belongs to the MurB family. It depends on FAD as a cofactor.

The protein resides in the cytoplasm. It catalyses the reaction UDP-N-acetyl-alpha-D-muramate + NADP(+) = UDP-N-acetyl-3-O-(1-carboxyvinyl)-alpha-D-glucosamine + NADPH + H(+). It functions in the pathway cell wall biogenesis; peptidoglycan biosynthesis. Functionally, cell wall formation. This Cereibacter sphaeroides (strain ATCC 17023 / DSM 158 / JCM 6121 / CCUG 31486 / LMG 2827 / NBRC 12203 / NCIMB 8253 / ATH 2.4.1.) (Rhodobacter sphaeroides) protein is UDP-N-acetylenolpyruvoylglucosamine reductase.